The following is a 308-amino-acid chain: Olfactory receptor 5K1 (308 aa).

Residues 1 to 25 (MAEENHTMKNEFILTGFTDHPELKT) are Extracellular-facing. N-linked (GlcNAc...) asparagine glycosylation occurs at N5. The chain crosses the membrane as a helical span at residues 26-46 (LLFVVFFAIYLITVVGNISLV). At 47 to 54 (ALIFTHRR) the chain is on the cytoplasmic side. The helical transmembrane segment at 55 to 75 (LHTPMYIFLGNLALVDSCCAC) threads the bilayer. The Extracellular segment spans residues 76 to 99 (AITPKMLENFFSENKRISLYECAV). Residues C97 and C189 are joined by a disulfide bond. A helical membrane pass occupies residues 100–120 (QFYFLCTVETADCFLLAAMAY). At 121–139 (DRYVAICNPLQYHIMMSKK) the chain is on the cytoplasmic side. A helical membrane pass occupies residues 140 to 160 (LCIQMTTGAFIAGNLHSMIHV). Over 161–196 (GLVFRLVFCGSNHINHFYCDILPLYRLSCVDPYINE) the chain is Extracellular. The helical transmembrane segment at 197 to 217 (LVLFIFSGSVQVFTIGSVLIS) threads the bilayer. Over 218-237 (YLYILLTIFKMKSKEGRAKA) the chain is Cytoplasmic. The chain crosses the membrane as a helical span at residues 238 to 258 (FSTCASHFLSVSLFYGSLFFM). The Extracellular portion of the chain corresponds to 259–271 (YVRPNLLEEGDKD). A helical membrane pass occupies residues 272 to 292 (IPAAILFTIVVPLLNPFIYSL). The Cytoplasmic segment spans residues 293-308 (RNREVISVLRKILMKK).

The protein belongs to the G-protein coupled receptor 1 family.

The protein resides in the cell membrane. Its function is as follows. Odorant receptor. This Homo sapiens (Human) protein is Olfactory receptor 5K1 (OR5K1).